The sequence spans 490 residues: Betaine aldehyde dehydrogenase (490 aa).

Residue Asp93 participates in K(+) binding. 150-152 (GAW) serves as a coordination point for NAD(+). Residue Lys162 is the Charge relay system of the active site. Residue 176 to 179 (KPSE) participates in NAD(+) binding. Val180 is a binding site for K(+). Residue 230 to 233 (GIAS) participates in NAD(+) binding. Position 246 (Leu246) interacts with K(+). Glu252 functions as the Proton acceptor in the catalytic mechanism. Positions 254, 286, and 387 each coordinate NAD(+). Cys286 acts as the Nucleophile in catalysis. Cys286 is subject to Cysteine sulfenic acid (-SOH). The K(+) site is built by Lys457 and Gly460. The active-site Charge relay system is Glu464.

The protein belongs to the aldehyde dehydrogenase family. In terms of assembly, dimer of dimers. K(+) is required as a cofactor.

The enzyme catalyses betaine aldehyde + NAD(+) + H2O = glycine betaine + NADH + 2 H(+). The protein operates within amine and polyamine biosynthesis; betaine biosynthesis via choline pathway; betaine from betaine aldehyde: step 1/1. Involved in the biosynthesis of the osmoprotectant glycine betaine. Catalyzes the irreversible oxidation of betaine aldehyde to the corresponding acid. The polypeptide is Betaine aldehyde dehydrogenase (Yersinia pseudotuberculosis serotype O:3 (strain YPIII)).